Reading from the N-terminus, the 151-residue chain is Histone H2A.2.2 (151 aa).

N-acetylmethionine is present on Met1. The interval 129–151 (EKAEKAGTKAKSPKKATKSPKKA) is disordered. Residues 139–151 (KSPKKATKSPKKA) show a composition bias toward basic residues. 2 short sequence motifs (SPKK motif) span residues 140–143 (SPKK) and 147–150 (SPKK).

This sequence belongs to the histone H2A family. As to quaternary structure, the nucleosome is a histone octamer containing two molecules each of H2A, H2B, H3 and H4 assembled in one H3-H4 heterotetramer and two H2A-H2B heterodimers. The octamer wraps approximately 147 bp of DNA. Phosphorylated within its C-terminal part, probably at the SPKK motifs.

The protein localises to the nucleus. It is found in the chromosome. In terms of biological role, core component of nucleosome. Nucleosomes wrap and compact DNA into chromatin, limiting DNA accessibility to the cellular machineries which require DNA as a template. Histones thereby play a central role in transcription regulation, DNA repair, DNA replication and chromosomal stability. DNA accessibility is regulated via a complex set of post-translational modifications of histones, also called histone code, and nucleosome remodeling. The protein is Histone H2A.2.2 of Triticum aestivum (Wheat).